Consider the following 434-residue polypeptide: Alpha-enolase (434 aa).

Ser-2 bears the N-acetylserine mark. Lys-5 carries the post-translational modification N6-acetyllysine. The residue at position 27 (Ser-27) is a Phosphoserine. Residues Phe-31–Gly-38 form an epitope recognized by CAR and healthy patient antibodies region. A Mg(2+)-binding site is contributed by Ser-40. Position 44 is a phosphotyrosine (Tyr-44). The epitope recognized by CAR antibodies stretch occupies residues Arg-56 to Ser-63. Lys-60 carries the N6-acetyllysine; alternate modification. At Lys-60 the chain carries N6-succinyllysine; alternate. N6-acetyllysine is present on residues Lys-64 and Lys-71. Lys-89 is subject to N6-acetyllysine; alternate. An N6-succinyllysine; alternate modification is found at Lys-89. N6-acetyllysine occurs at positions 92 and 126. Residues Met-97–Thr-237 are required for repression of c-myc promoter activity. Substrate-binding residues include His-158 and Glu-167. N6-acetyllysine occurs at positions 193 and 199. Position 202 is an N6-acetyllysine; alternate (Lys-202). Lys-202 participates in a covalent cross-link: Glycyl lysine isopeptide (Lys-Gly) (interchain with G-Cter in SUMO2); alternate. The active-site Proton donor is Glu-210. 2 positions are modified to N6-acetyllysine; alternate: Lys-228 and Lys-233. Position 228 is an N6-succinyllysine; alternate (Lys-228). At Lys-228 the chain carries N6-(2-hydroxyisobutyryl)lysine; alternate. Position 233 is an N6-malonyllysine; alternate (Lys-233). Asp-245 is a binding site for Mg(2+). Ser-254 bears the Phosphoserine mark. Residue Lys-256 is modified to N6-acetyllysine. Residues Ser-263 and Ser-272 each carry the phosphoserine modification. N6-acetyllysine; alternate is present on Lys-281. Position 281 is an N6-(2-hydroxyisobutyryl)lysine; alternate (Lys-281). Lys-285 is modified (N6-acetyllysine). Residue Tyr-287 is modified to Phosphotyrosine. Phosphoserine is present on Ser-291. Mg(2+) contacts are provided by Glu-293 and Asp-318. Positions 293 and 318 each coordinate substrate. Residues Lys-335 and Lys-343 each carry the N6-acetyllysine modification. Lys-343 functions as the Proton acceptor in the catalytic mechanism. Substrate is bound by residues Ser-370–Ser-373 and Lys-394. The interval Ala-405–Lys-434 is required for interaction with PLG. Residue Lys-406 is modified to N6-acetyllysine. Residue Lys-420 is modified to N6-acetyllysine; alternate. Lys-420 carries the post-translational modification N6-succinyllysine; alternate. Lys-420 is modified (N6-malonyllysine; alternate).

The protein belongs to the enolase family. Mammalian enolase is composed of 3 isozyme subunits, alpha, beta and gamma, which can form homodimers or heterodimers which are cell-type and development-specific. ENO1 interacts with PLG in the neuronal plasma membrane and promotes its activation. The C-terminal lysine is required for this binding. Isoform MBP-1 interacts with TRAPPC2B. Interacts with ENO4 and PGAM2. Interacts with CMTM6. It depends on Mg(2+) as a cofactor. ISGylated. Post-translationally, lysine 2-hydroxyisobutyrylation (Khib) by p300/EP300 activates the phosphopyruvate hydratase activity. The alpha/alpha homodimer is expressed in embryo and in most adult tissues. The alpha/beta heterodimer and the beta/beta homodimer are found in striated muscle, and the alpha/gamma heterodimer and the gamma/gamma homodimer in neurons.

The protein localises to the cytoplasm. It localises to the cell membrane. Its subcellular location is the myofibril. It is found in the sarcomere. The protein resides in the m line. The protein localises to the nucleus. It carries out the reaction (2R)-2-phosphoglycerate = phosphoenolpyruvate + H2O. It functions in the pathway carbohydrate degradation; glycolysis; pyruvate from D-glyceraldehyde 3-phosphate: step 4/5. Functionally, glycolytic enzyme the catalyzes the conversion of 2-phosphoglycerate to phosphoenolpyruvate. In addition to glycolysis, involved in various processes such as growth control, hypoxia tolerance and allergic responses. May also function in the intravascular and pericellular fibrinolytic system due to its ability to serve as a receptor and activator of plasminogen on the cell surface of several cell-types such as leukocytes and neurons. Stimulates immunoglobulin production. Its function is as follows. Binds to the myc promoter and acts as a transcriptional repressor. May be a tumor suppressor. This chain is Alpha-enolase (ENO1), found in Homo sapiens (Human).